The primary structure comprises 125 residues: Small ribosomal subunit protein uS13 (125 aa).

A disordered region spans residues 97–125 (PVRGQKTRSNARTRKGPRPSRIKTKKKSS). The span at 101-125 (QKTRSNARTRKGPRPSRIKTKKKSS) shows a compositional bias: basic residues.

It belongs to the universal ribosomal protein uS13 family. Part of the 30S ribosomal subunit. Forms a loose heterodimer with protein S19. Forms two bridges to the 50S subunit in the 70S ribosome.

In terms of biological role, located at the top of the head of the 30S subunit, it contacts several helices of the 16S rRNA. In the 70S ribosome it contacts the 23S rRNA (bridge B1a) and protein L5 of the 50S subunit (bridge B1b), connecting the 2 subunits; these bridges are implicated in subunit movement. Contacts the tRNAs in the A and P-sites. This is Small ribosomal subunit protein uS13 from Thermotoga neapolitana (strain ATCC 49049 / DSM 4359 / NBRC 107923 / NS-E).